The sequence spans 547 residues: Glucose-6-phosphate isomerase (547 aa).

Residue glutamate 355 is the Proton donor of the active site. Catalysis depends on residues histidine 386 and lysine 512.

It belongs to the GPI family.

The protein localises to the cytoplasm. It catalyses the reaction alpha-D-glucose 6-phosphate = beta-D-fructose 6-phosphate. The protein operates within carbohydrate biosynthesis; gluconeogenesis. It functions in the pathway carbohydrate degradation; glycolysis; D-glyceraldehyde 3-phosphate and glycerone phosphate from D-glucose: step 2/4. Its function is as follows. Catalyzes the reversible isomerization of glucose-6-phosphate to fructose-6-phosphate. The sequence is that of Glucose-6-phosphate isomerase from Corynebacterium diphtheriae (strain ATCC 700971 / NCTC 13129 / Biotype gravis).